A 371-amino-acid polypeptide reads, in one-letter code: 4-hydroxy-3-methylbut-2-en-1-yl diphosphate synthase (flavodoxin) (371 aa).

[4Fe-4S] cluster contacts are provided by Cys270, Cys273, Cys305, and Glu312.

It belongs to the IspG family. Requires [4Fe-4S] cluster as cofactor.

It catalyses the reaction (2E)-4-hydroxy-3-methylbut-2-enyl diphosphate + oxidized [flavodoxin] + H2O + 2 H(+) = 2-C-methyl-D-erythritol 2,4-cyclic diphosphate + reduced [flavodoxin]. It functions in the pathway isoprenoid biosynthesis; isopentenyl diphosphate biosynthesis via DXP pathway; isopentenyl diphosphate from 1-deoxy-D-xylulose 5-phosphate: step 5/6. Functionally, converts 2C-methyl-D-erythritol 2,4-cyclodiphosphate (ME-2,4cPP) into 1-hydroxy-2-methyl-2-(E)-butenyl 4-diphosphate. The protein is 4-hydroxy-3-methylbut-2-en-1-yl diphosphate synthase (flavodoxin) of Shewanella pealeana (strain ATCC 700345 / ANG-SQ1).